We begin with the raw amino-acid sequence, 71 residues long: MNNVKELSIKEMQQVTGGDQMSDGVNYGKGSSLSKGGAKCGLGIVGGLATIPSGPLGWLAGAAGVINSCMK.

Residues 1-18 constitute a propeptide that is removed on maturation; the sequence is MNNVKELSIKEMQQVTGG. Residues Cys-40 and Cys-69 are joined by a disulfide bond.

The protein resides in the secreted. Its function is as follows. Has antibacterial activity. The protein is Bacteriocin carnobacteriocin-A (cbnBA) of Carnobacterium maltaromaticum (Carnobacterium piscicola).